We begin with the raw amino-acid sequence, 237 residues long: Phosphoribosylaminoimidazole-succinocarboxamide synthase (237 aa).

This sequence belongs to the SAICAR synthetase family.

The catalysed reaction is 5-amino-1-(5-phospho-D-ribosyl)imidazole-4-carboxylate + L-aspartate + ATP = (2S)-2-[5-amino-1-(5-phospho-beta-D-ribosyl)imidazole-4-carboxamido]succinate + ADP + phosphate + 2 H(+). Its pathway is purine metabolism; IMP biosynthesis via de novo pathway; 5-amino-1-(5-phospho-D-ribosyl)imidazole-4-carboxamide from 5-amino-1-(5-phospho-D-ribosyl)imidazole-4-carboxylate: step 1/2. The chain is Phosphoribosylaminoimidazole-succinocarboxamide synthase from Enterobacter sp. (strain 638).